A 312-amino-acid chain; its full sequence is Fe-S cluster assembly protein DRE2 (312 aa).

The N-terminal SAM-like domain stretch occupies residues 7-139 (LSDVPRVLLL…VKPVFEEQSV (133 aa)). The segment at 140 to 204 (LLPFSINRSQ…EDELINEDEL (65 aa)) is linker. Positions 214, 225, 228, and 230 each coordinate [2Fe-2S] cluster. The segment at 214–230 (CRPKAGKRRRACKDCTC) is fe-S binding site A. 4 residues coordinate [4Fe-4S] cluster: cysteine 275, cysteine 278, cysteine 286, and cysteine 289. 2 short sequence motifs (cx2C motif) span residues 275-278 (CGNC) and 286-289 (CDGC). The tract at residues 275 to 289 (CGNCSLGDAFRCDGC) is fe-S binding site B.

It belongs to the anamorsin family. In terms of assembly, monomer. Interacts with TAH18. Interacts with MIA40. The cofactor is [2Fe-2S] cluster. [4Fe-4S] cluster serves as cofactor.

Its subcellular location is the cytoplasm. It is found in the mitochondrion intermembrane space. Functionally, component of the cytosolic iron-sulfur (Fe-S) protein assembly (CIA) machinery required for the maturation of extramitochondrial Fe-S proteins. Part of an electron transfer chain functioning in an early step of cytosolic Fe-S biogenesis, facilitating the de novo assembly of a [4Fe-4S] cluster on the scaffold complex CFD1-NBP35. Electrons are transferred to DRE2 from NADPH via the FAD- and FMN-containing protein TAH18. TAH18-DRE2 are also required for the assembly of the diferric tyrosyl radical cofactor of ribonucleotide reductase (RNR), probably by providing electrons for reduction during radical cofactor maturation in the catalytic small subunit RNR2. In Arthroderma otae (strain ATCC MYA-4605 / CBS 113480) (Microsporum canis), this protein is Fe-S cluster assembly protein DRE2.